We begin with the raw amino-acid sequence, 93 residues long: Phosphoribosyl-ATP pyrophosphatase (93 aa).

The protein belongs to the PRA-PH family.

The protein resides in the cytoplasm. The enzyme catalyses 1-(5-phospho-beta-D-ribosyl)-ATP + H2O = 1-(5-phospho-beta-D-ribosyl)-5'-AMP + diphosphate + H(+). Its pathway is amino-acid biosynthesis; L-histidine biosynthesis; L-histidine from 5-phospho-alpha-D-ribose 1-diphosphate: step 2/9. In Mycobacterium avium (strain 104), this protein is Phosphoribosyl-ATP pyrophosphatase.